An 81-amino-acid chain; its full sequence is MNVDHEVNLLVEEIRRLGSKGNDGKLSVKFGVLFSDDKCANLFEALVGTLKAAKKRKIVTYQGELLLQGVHDNVDIVLLQD.

This sequence belongs to the costars family.

This chain is Costars family protein ABRACL (abracl), found in Xenopus tropicalis (Western clawed frog).